A 199-amino-acid chain; its full sequence is Pneumococcal vaccine antigen A homolog (199 aa).

It is found in the cell surface. This is Pneumococcal vaccine antigen A homolog (pvaA) from Streptococcus pyogenes serotype M18 (strain MGAS8232).